A 358-amino-acid polypeptide reads, in one-letter code: Ribosomal RNA-processing protein 8 (358 aa).

A disordered region spans residues 1–81 (MKPFEVPPWE…PQDSSDDDYE (81 aa)). Basic residues predominate over residues 30-44 (AKKKPKKKKPKKKKA). Phosphoserine occurs at positions 75 and 76. His-185, Gly-220, Asp-238, and Cys-267 together coordinate S-adenosyl-L-methionine.

It belongs to the methyltransferase superfamily. RRP8 family.

It localises to the nucleus. The protein localises to the nucleolus. Its function is as follows. Probable methyltransferase required to silence rDNA. This Drosophila melanogaster (Fruit fly) protein is Ribosomal RNA-processing protein 8.